The following is a 253-amino-acid chain: Indole-3-glycerol phosphate synthase (253 aa).

This sequence belongs to the TrpC family.

It carries out the reaction 1-(2-carboxyphenylamino)-1-deoxy-D-ribulose 5-phosphate + H(+) = (1S,2R)-1-C-(indol-3-yl)glycerol 3-phosphate + CO2 + H2O. It participates in amino-acid biosynthesis; L-tryptophan biosynthesis; L-tryptophan from chorismate: step 4/5. This Bacillus cereus (strain AH187) protein is Indole-3-glycerol phosphate synthase.